A 162-amino-acid polypeptide reads, in one-letter code: Serine-protein kinase RsbW (162 aa).

The protein belongs to the anti-sigma-factor family.

It carries out the reaction L-seryl-[protein] + ATP = O-phospho-L-seryl-[protein] + ADP + H(+). The catalysed reaction is L-threonyl-[protein] + ATP = O-phospho-L-threonyl-[protein] + ADP + H(+). In terms of biological role, negative regulator of sigma-B activity. Phosphorylates and inactivates its specific antagonist protein, RsbV. Upon phosphorylation of RsbV, RsbW is released and binds to sigma-B, thereby blocking its ability to form an RNA polymerase holoenzyme (E-sigma-B). The protein is Serine-protein kinase RsbW of Halalkalibacterium halodurans (strain ATCC BAA-125 / DSM 18197 / FERM 7344 / JCM 9153 / C-125) (Bacillus halodurans).